A 104-amino-acid chain; its full sequence is SOSS complex subunit C (104 aa).

N-acetylalanine is present on Ala2. Residue Ser50 is modified to Phosphoserine.

It belongs to the SOSS-C family. As to quaternary structure, component of the SOSS complex, composed of SOSS-B (SOSS-B1/NABP2 or SOSS-B2/NABP1), SOSS-A/INTS3 and SOSS-C/INIP. SOSS complexes containing SOSS-B1/NABP2 are more abundant than complexes containing SOSS-B2/NABP1. Interacts with INTS3; the interaction is direct.

It is found in the nucleus. Its function is as follows. Component of the SOSS complex, a multiprotein complex that functions downstream of the MRN complex to promote DNA repair and G2/M checkpoint. The SOSS complex associates with single-stranded DNA at DNA lesions and influences diverse endpoints in the cellular DNA damage response including cell-cycle checkpoint activation, recombinational repair and maintenance of genomic stability. Required for efficient homologous recombination-dependent repair of double-strand breaks (DSBs) and ATM-dependent signaling pathways. This chain is SOSS complex subunit C (INIP), found in Homo sapiens (Human).